Consider the following 472-residue polypeptide: Probable dipeptidase A (472 aa).

C10 is a catalytic residue.

Belongs to the peptidase C69 family.

It catalyses the reaction an L-aminoacyl-L-amino acid + H2O = 2 an L-alpha-amino acid. This chain is Probable dipeptidase A (pepDA), found in Streptococcus pyogenes serotype M1.